We begin with the raw amino-acid sequence, 207 residues long: Cytochrome c biogenesis ATP-binding export protein CcmA 1 (207 aa).

Residues 6–207 form the ABC transporter domain; that stretch reads LEALDLAGVR…KTSQTVRMGA (202 aa). 38-45 is an ATP binding site; that stretch reads GENGSGKT.

This sequence belongs to the ABC transporter superfamily. CcmA exporter (TC 3.A.1.107) family. The complex is composed of two ATP-binding proteins (CcmA) and two transmembrane proteins (CcmB).

The protein localises to the cell inner membrane. It carries out the reaction heme b(in) + ATP + H2O = heme b(out) + ADP + phosphate + H(+). Functionally, part of the ABC transporter complex CcmAB involved in the biogenesis of c-type cytochromes; once thought to export heme, this seems not to be the case, but its exact role is uncertain. Responsible for energy coupling to the transport system. In Cupriavidus metallidurans (strain ATCC 43123 / DSM 2839 / NBRC 102507 / CH34) (Ralstonia metallidurans), this protein is Cytochrome c biogenesis ATP-binding export protein CcmA 1.